We begin with the raw amino-acid sequence, 514 residues long: Bifunctional purine biosynthesis protein PurH (514 aa).

The region spanning 1-146 (MPPLALLSTS…KNFAHVTVLC (146 aa)) is the MGS-like domain.

Belongs to the PurH family.

The enzyme catalyses (6R)-10-formyltetrahydrofolate + 5-amino-1-(5-phospho-beta-D-ribosyl)imidazole-4-carboxamide = 5-formamido-1-(5-phospho-D-ribosyl)imidazole-4-carboxamide + (6S)-5,6,7,8-tetrahydrofolate. It carries out the reaction IMP + H2O = 5-formamido-1-(5-phospho-D-ribosyl)imidazole-4-carboxamide. It functions in the pathway purine metabolism; IMP biosynthesis via de novo pathway; 5-formamido-1-(5-phospho-D-ribosyl)imidazole-4-carboxamide from 5-amino-1-(5-phospho-D-ribosyl)imidazole-4-carboxamide (10-formyl THF route): step 1/1. The protein operates within purine metabolism; IMP biosynthesis via de novo pathway; IMP from 5-formamido-1-(5-phospho-D-ribosyl)imidazole-4-carboxamide: step 1/1. In Cyanothece sp. (strain PCC 7425 / ATCC 29141), this protein is Bifunctional purine biosynthesis protein PurH.